The primary structure comprises 297 residues: Formamidopyrimidine-DNA glycosylase (297 aa).

Pro-2 acts as the Schiff-base intermediate with DNA in catalysis. Glu-3 functions as the Proton donor in the catalytic mechanism. Lys-58 serves as the catalytic Proton donor; for beta-elimination activity. His-106, Arg-125, and Arg-168 together coordinate DNA. An FPG-type zinc finger spans residues 259-295 (RVYDREGLACTARGCRGVVRRVVQSGRSTFFCEVCQP). Arg-285 serves as the catalytic Proton donor; for delta-elimination activity.

Belongs to the FPG family. As to quaternary structure, monomer. It depends on Zn(2+) as a cofactor.

It catalyses the reaction Hydrolysis of DNA containing ring-opened 7-methylguanine residues, releasing 2,6-diamino-4-hydroxy-5-(N-methyl)formamidopyrimidine.. The catalysed reaction is 2'-deoxyribonucleotide-(2'-deoxyribose 5'-phosphate)-2'-deoxyribonucleotide-DNA = a 3'-end 2'-deoxyribonucleotide-(2,3-dehydro-2,3-deoxyribose 5'-phosphate)-DNA + a 5'-end 5'-phospho-2'-deoxyribonucleoside-DNA + H(+). Functionally, involved in base excision repair of DNA damaged by oxidation or by mutagenic agents. Acts as a DNA glycosylase that recognizes and removes damaged bases. Has a preference for oxidized purines, such as 7,8-dihydro-8-oxoguanine (8-oxoG). Has AP (apurinic/apyrimidinic) lyase activity and introduces nicks in the DNA strand. Cleaves the DNA backbone by beta-delta elimination to generate a single-strand break at the site of the removed base with both 3'- and 5'-phosphates. This Methylobacterium nodulans (strain LMG 21967 / CNCM I-2342 / ORS 2060) protein is Formamidopyrimidine-DNA glycosylase.